A 453-amino-acid polypeptide reads, in one-letter code: Wall-associated protein (453 aa).

Positions 1–29 (MKMKRKLLSLVSVLTILLGAFWVTKIVKA) are cleaved as a signal peptide. The segment at 331–403 (GRASSRVKRQ…TASQTNVPTT (73 aa)) is disordered. Over residues 342 to 403 (ETTTVTETTT…TASQTNVPTT (62 aa)) the composition is skewed to low complexity. The short motif at 422–426 (LPSTG) is the LPXTG sorting signal element. Residue Thr-425 is modified to Pentaglycyl murein peptidoglycan amidated threonine. Positions 426–453 (GEQAGLLLTTVGLVIVAVAGVYFYRTRR) are cleaved as a propeptide — removed by sortase.

Its subcellular location is the secreted. The protein localises to the cell wall. The chain is Wall-associated protein (wapA) from Streptococcus mutans serotype c (strain ATCC 700610 / UA159).